The sequence spans 511 residues: cAMP-regulated M3L protein (511 aa).

It to D.discoideum protein M3R.

The chain is cAMP-regulated M3L protein (prtA) from Dictyostelium discoideum (Social amoeba).